A 546-amino-acid chain; its full sequence is Chaperonin GroEL (546 aa).

ATP-binding positions include 29 to 32 (TLGP), Lys50, 86 to 90 (DGTTT), Gly414, and Asp495. The segment at 526–546 (AKEGAPAGGGMPDMGGMGGMM) is disordered. Over residues 531 to 546 (PAGGGMPDMGGMGGMM) the composition is skewed to gly residues.

Belongs to the chaperonin (HSP60) family. In terms of assembly, forms a cylinder of 14 subunits composed of two heptameric rings stacked back-to-back. Interacts with the co-chaperonin GroES.

The protein localises to the cytoplasm. The catalysed reaction is ATP + H2O + a folded polypeptide = ADP + phosphate + an unfolded polypeptide.. Its function is as follows. Together with its co-chaperonin GroES, plays an essential role in assisting protein folding. The GroEL-GroES system forms a nano-cage that allows encapsulation of the non-native substrate proteins and provides a physical environment optimized to promote and accelerate protein folding. This is Chaperonin GroEL from Jannaschia sp. (strain CCS1).